A 775-amino-acid chain; its full sequence is Tumor necrosis factor alpha-induced protein 3 (775 aa).

Position 2 is an N-acetylalanine (Ala-2). Residues 58–300 form a TRAF-binding region; sequence PQFREIIHKA…LTDPENEMKE (243 aa). The 172-residue stretch at 92-263 folds into the OTU domain; that stretch reads LVALKTNGDG…SQHFVPLVTL (172 aa). Asp-100 is an active-site residue. The active-site Nucleophile is Cys-103. Interaction with ubiquitin stretches follow at residues 157-159, 190-192, and 224-227; these read LCY, SLE, and FAPL. The active-site Proton acceptor is the His-256. The segment at 369-775 is interaction with TNIP1; it reads AQNPLEPSTP…ECYQFKQMYG (407 aa). The A20-type 1 zinc finger occupies 381 to 416; the sequence is SLMDIKCETPNCPFFMSVNTQPLCHECSERRQKNQS. The interaction with RIPK1 stretch occupies residues 386 to 445; sequence KCETPNCPFFMSVNTQPLCHECSERRQKNQSKLPKLNSKLGPEGLPGVGLGSSNWSPEET. Zn(2+) is bound by residues Cys-387, Cys-392, Cys-404, and Cys-407. Residues 415-455 form a disordered region; that stretch reads QSKLPKLNSKLGPEGLPGVGLGSSNWSPEETAGGPHSAPPT. The residue at position 451 (Ser-451) is a Phosphoserine. 2 consecutive A20-type zinc fingers follow at residues 464–499 and 500–533; these read ETTA…NASH and TADP…AEPS. Residues Cys-470, Cys-475, Cys-487, Cys-490, Cys-506, Cys-509, Cys-521, and Cys-524 each contribute to the Zn(2+) site. Over residues 567–580 the composition is skewed to polar residues; that stretch reads TGNVSPSGCLSQAA. Residues 567–590 are disordered; it reads TGNVSPSGCLSQAARTPGDRAGTS. 4 A20-type zinc fingers span residues 586–621, 636–671, 695–730, and 741–775; these read RAGT…ENKQ, FQNN…NQRF, VASR…RVGS, and EPPK…QMYG. The tract at residues 590 to 640 is required for proteasomal degradation of UBE2N and UBE2D3, TRAF6 deubiquitination, and TAX1BP1 interaction with UBE2N; that stretch reads SKCRKAGCMYFGTPENKGFCTLCFIEYRENKQSVTASEKAGSPAPRFQNNV. Positions 591–775 are sufficient for inhibitory activity of TNF-induced NF-kappa-B activity; that stretch reads KCRKAGCMYF…ECYQFKQMYG (185 aa). Zn(2+) is bound by residues Cys-592, Cys-597, Cys-609, Cys-612, Cys-642, Cys-647, Cys-659, Cys-662, Cys-701, Cys-706, Cys-718, Cys-721, Cys-747, Cys-752, Cys-764, and Cys-767. The interval 682 to 775 is required for lysosomal localization and for TRAF2 lysosomal degradation; sequence RSSQHRDMPR…ECYQFKQMYG (94 aa).

It belongs to the peptidase C64 family. As to quaternary structure, homodimer. Interacts with TNIP1, TAX1BP1 and TRAF2. Interacts with RNF11, ITCH and TAX1BP1 only after TNF stimulation; these interaction are transient and they are lost after 1 hour of stimulation with TNF. Interacts with YWHAZ and YWHAH. Interacts with IKBKG; the interaction is induced by TNF stimulation and by polyubiquitin. Interacts with RIPK1. Interacts with UBE2N; the interaction requires TAX1BP1. Interacts with TRAF6. In terms of tissue distribution, found in most tissues during development. Strikingly high levels are found in lymphoid organs, including the thymus, spleen, and gut-associated lymphoid tissue. Constitutively expressed in immature and mature thymocyte subpopulations as well as in resting peripheral T-cells; activation of these leads to down-regulation.

Its subcellular location is the cytoplasm. The protein resides in the nucleus. It is found in the lysosome. The enzyme catalyses Thiol-dependent hydrolysis of ester, thioester, amide, peptide and isopeptide bonds formed by the C-terminal Gly of ubiquitin (a 76-residue protein attached to proteins as an intracellular targeting signal).. Its function is as follows. Ubiquitin-editing enzyme that contains both ubiquitin ligase and deubiquitinase activities. Involved in immune and inflammatory responses signaled by cytokines, such as TNF-alpha and IL-1 beta, or pathogens via Toll-like receptors (TLRs) through terminating NF-kappa-B activity. Essential component of a ubiquitin-editing protein complex, comprising also RNF11, ITCH and TAX1BP1, that ensures the transient nature of inflammatory signaling pathways. In cooperation with TAX1BP1 promotes disassembly of E2-E3 ubiquitin protein ligase complexes in IL-1R and TNFR-1 pathways; affected are at least E3 ligases TRAF6, TRAF2 and BIRC2, and E2 ubiquitin-conjugating enzymes UBE2N and UBE2D3. In cooperation with TAX1BP1 promotes ubiquitination of UBE2N and proteasomal degradation of UBE2N and UBE2D3. Upon TNF stimulation, deubiquitinates 'Lys-63'-polyubiquitin chains on RIPK1 and catalyzes the formation of 'Lys-48'-polyubiquitin chains. This leads to RIPK1 proteasomal degradation and consequently termination of the TNF- or LPS-mediated activation of NF-kappa-B. Deubiquitinates TRAF6 probably acting on 'Lys-63'-linked polyubiquitin. Upon T-cell receptor (TCR)-mediated T-cell activation, deubiquitinates 'Lys-63'-polyubiquitin chains on MALT1 thereby mediating disassociation of the CBM (CARD11:BCL10:MALT1) and IKK complexes and preventing sustained IKK activation. Deubiquitinates NEMO/IKBKG; the function is facilitated by TNIP1 and leads to inhibition of NF-kappa-B activation. Upon stimulation by bacterial peptidoglycans, probably deubiquitinates RIPK2. Can also inhibit I-kappa-B-kinase (IKK) through a non-catalytic mechanism which involves polyubiquitin; polyubiquitin promotes association with IKBKG and prevents IKK MAP3K7-mediated phosphorylation. Targets TRAF2 for lysosomal degradation. In vitro able to deubiquitinate 'Lys-11'-, 'Lys-48'- and 'Lys-63' polyubiquitin chains. Inhibitor of programmed cell death. Has a role in the function of the lymphoid system. Required for LPS-induced production of pro-inflammatory cytokines and IFN beta in LPS-tolerized macrophages. This chain is Tumor necrosis factor alpha-induced protein 3 (Tnfaip3), found in Mus musculus (Mouse).